The sequence spans 310 residues: MDVAAMARCVGRCYVSPAFGESESHRLSERRFLKLSSSTNSDPAGSKSLKLRGKIHRRMSYFRPIMAKDESISSRSGETKQINGKQKNIVWHDCPVTKSDRQELIKQKGCVIWITGLSGSGKSSLACALSRALHNRGKLSYILDGDNVRHGLNSDLSFEADDRAENIRRVGEVAKLFADSGIICIASLISPYRIERAACRALLPQGDFIEVFMDVPLHVCEARDPKGLYKRARAGKIKGFTGVDDPYEAPLDCEIVIQNSRDKGLSSSSSSSSSPSSSSSSLCEMADIVVSYLDQNGYLKKHSTKSRNCM.

Residues 1–75 (MDVAAMARCV…MAKDESISSR (75 aa)) constitute a chloroplast transit peptide. ATP is bound at residue 116-124 (GLSGSGKSS). Substrate contacts are provided by residues aspartate 146, arginine 149, arginine 163, asparagine 166, 189-190 (IS), and glycine 239. Serine 190 (phosphoserine intermediate) is an active-site residue.

Belongs to the APS kinase family. As to quaternary structure, homodimer; disulfide-linked. In terms of tissue distribution, expressed in root vasculature, root tips, leaf epidermal and guard cells, pollen grains and radicle of immature seeds.

Its subcellular location is the plastid. The protein localises to the chloroplast. It carries out the reaction adenosine 5'-phosphosulfate + ATP = 3'-phosphoadenylyl sulfate + ADP + H(+). It participates in sulfur metabolism; hydrogen sulfide biosynthesis; sulfite from sulfate: step 2/3. Functionally, catalyzes the phosphorylation of adenosine 5'-phosphosulfate to 3'-phosphoadenylyl sulfate, which is the activated sulfate form for sulfation reactions. Essential for plant reproduction and viability. The polypeptide is Adenylyl-sulfate kinase 4, chloroplastic (APK4) (Arabidopsis thaliana (Mouse-ear cress)).